Here is a 198-residue protein sequence, read N- to C-terminus: Large ribosomal subunit protein uL23c (198 aa).

A chloroplast-targeting transit peptide spans 1–76; that stretch reads MATTAPNLHS…SFGRDLMVAQ (76 aa).

It belongs to the universal ribosomal protein uL23 family. In terms of assembly, component of the chloroplast large ribosomal subunit (LSU). Mature 70S chloroplast ribosomes of higher plants consist of a small (30S) and a large (50S) subunit. The 30S small subunit contains 1 molecule of ribosomal RNA (16S rRNA) and 24 different proteins. The 50S large subunit contains 3 rRNA molecules (23S, 5S and 4.5S rRNA) and 33 different proteins.

It is found in the plastid. The protein localises to the chloroplast. In terms of biological role, component of the chloroplast ribosome (chloro-ribosome), a dedicated translation machinery responsible for the synthesis of chloroplast genome-encoded proteins, including proteins of the transcription and translation machinery and components of the photosynthetic apparatus. The polypeptide is Large ribosomal subunit protein uL23c (RPL23) (Spinacia oleracea (Spinach)).